The primary structure comprises 204 residues: MTAAFASDQRLENGAEQLESLRRQMALLSEKVSGGPSRSGDLVPAGPVSLPPGTVGVLSGARSLLLSMVASVTAAGGNAAIVGQPDIGLLAAVEMGADLSRLAVIPDPGTDPVEVAAVLIDGMDLVVLGLGGRRVTRARARAVVARARQKGCTLLVTDGDWQGVSTRLAARVCGYEITPALRGVPTPGLGRISGVRLQINGRGR.

A helical membrane pass occupies residues 63–83 (SLLLSMVASVTAAGGNAAIVG).

The protein localises to the membrane. This is an uncharacterized protein from Mycobacterium tuberculosis (strain ATCC 25618 / H37Rv).